Consider the following 412-residue polypeptide: Multifunctional CCA protein (412 aa).

G8 and R11 together coordinate ATP. CTP contacts are provided by G8 and R11. Mg(2+)-binding residues include D21 and D23. The ATP site is built by R91, R137, and R140. CTP contacts are provided by R91, R137, and R140. Residues 225 to 326 (TGIHVMMVID…ADMLQATDAY (102 aa)) form the HD domain.

Belongs to the tRNA nucleotidyltransferase/poly(A) polymerase family. Bacterial CCA-adding enzyme type 1 subfamily. As to quaternary structure, monomer. Can also form homodimers and oligomers. Mg(2+) is required as a cofactor. The cofactor is Ni(2+).

It catalyses the reaction a tRNA precursor + 2 CTP + ATP = a tRNA with a 3' CCA end + 3 diphosphate. The catalysed reaction is a tRNA with a 3' CCA end + 2 CTP + ATP = a tRNA with a 3' CCACCA end + 3 diphosphate. Its function is as follows. Catalyzes the addition and repair of the essential 3'-terminal CCA sequence in tRNAs without using a nucleic acid template. Adds these three nucleotides in the order of C, C, and A to the tRNA nucleotide-73, using CTP and ATP as substrates and producing inorganic pyrophosphate. tRNA 3'-terminal CCA addition is required both for tRNA processing and repair. Also involved in tRNA surveillance by mediating tandem CCA addition to generate a CCACCA at the 3' terminus of unstable tRNAs. While stable tRNAs receive only 3'-terminal CCA, unstable tRNAs are marked with CCACCA and rapidly degraded. This Nitrosomonas europaea (strain ATCC 19718 / CIP 103999 / KCTC 2705 / NBRC 14298) protein is Multifunctional CCA protein.